The following is a 117-amino-acid chain: MKNKLLQLVEQNQIRKDLPNFNTGDNVKVHLRIKEENKERIQIFEGLVIAKDGPGKGLSQSFKVRKISSGIGVEKDFPLNSPIISAIEVIRRNKVRRKKLYYIRNKSGKSARLKEKK.

This sequence belongs to the bacterial ribosomal protein bL19 family.

This protein is located at the 30S-50S ribosomal subunit interface and may play a role in the structure and function of the aminoacyl-tRNA binding site. The polypeptide is Large ribosomal subunit protein bL19 (Mycoplasmopsis pulmonis (strain UAB CTIP) (Mycoplasma pulmonis)).